A 510-amino-acid chain; its full sequence is Glycerol kinase (510 aa).

Threonine 13 is a binding site for ADP. ATP is bound by residues threonine 13 and threonine 14. Threonine 13 contributes to the sn-glycerol 3-phosphate binding site. Arginine 17 is an ADP binding site. Sn-glycerol 3-phosphate contacts are provided by arginine 83, glutamate 84, tyrosine 135, and aspartate 255. Residues arginine 83, glutamate 84, tyrosine 135, aspartate 255, and glutamine 256 each coordinate glycerol. ADP is bound by residues threonine 277, glycine 321, glycine 421, and asparagine 425. Residues threonine 277, glycine 321, and glycine 421 each contribute to the ATP site.

This sequence belongs to the FGGY kinase family.

It carries out the reaction glycerol + ATP = sn-glycerol 3-phosphate + ADP + H(+). It functions in the pathway polyol metabolism; glycerol degradation via glycerol kinase pathway; sn-glycerol 3-phosphate from glycerol: step 1/1. Key enzyme in the regulation of glycerol uptake and metabolism. Catalyzes the phosphorylation of glycerol to yield sn-glycerol 3-phosphate. The chain is Glycerol kinase from Haloquadratum walsbyi (strain DSM 16790 / HBSQ001).